We begin with the raw amino-acid sequence, 879 residues long: Alanine--tRNA ligase (879 aa).

Residues H566, H570, C668, and H672 each coordinate Zn(2+).

Belongs to the class-II aminoacyl-tRNA synthetase family. Requires Zn(2+) as cofactor.

It localises to the cytoplasm. It catalyses the reaction tRNA(Ala) + L-alanine + ATP = L-alanyl-tRNA(Ala) + AMP + diphosphate. Catalyzes the attachment of alanine to tRNA(Ala) in a two-step reaction: alanine is first activated by ATP to form Ala-AMP and then transferred to the acceptor end of tRNA(Ala). Also edits incorrectly charged Ser-tRNA(Ala) and Gly-tRNA(Ala) via its editing domain. In Clostridium perfringens (strain ATCC 13124 / DSM 756 / JCM 1290 / NCIMB 6125 / NCTC 8237 / Type A), this protein is Alanine--tRNA ligase.